Consider the following 478-residue polypeptide: MVHLGPKPPQHRKGSFLDVPEYLLKELTELEGLLTVSGETLRKITDHFISELEKGLSKQGGNIPMIPGWVMDFPTGKEMGDYLAIDLGGTNLRVVLVKLGGNRDFDTTQSKFALPENMRTAKSEELWEFIAECLQKFVEEEFRNGVLSNLPLGFTFSYPASQGSINEGYLQRWTKGFDIEGVEGHDVVPMLQAAIEKRKVPIEVVALINDTTGTLVASMYTDPEAKMGLFSGTGCNGAYYDVVDNIPKLEGKVPDDIKSSSPMAINCEYGAFDNEHIILPRTKYDIQIDEESPRPGQQAFEKMISGYYLGEVLRLILLDLTSKQLIFKDQDLSKLQVPFILDTSIPARIEEDPFENLSDVQELFQEILGIQTTSPERKIIRRLAELIGERSARLSICGIAAICKKRGYKTAHCAADGSVYNKYPGFKERAAKGLRDIFQWESEEDPIVIVPAEDGLGAGAAIIAALTEKRLKDGLPLV.

Residues 21–465 (EYLLKELTEL…LGAGAAIIAA (445 aa)) form the Hexokinase domain. The segment at 75 to 208 (TGKEMGDYLA…KVPIEVVALI (134 aa)) is hexokinase small subdomain. Lys-111 is a binding site for ATP. The interval 151–177 (PLGFTFSYPASQGSINEGYLQRWTKGF) is glucose-binding. Positions 209 to 454 (NDTTGTLVAS…DPIVIVPAED (246 aa)) are hexokinase large subdomain.

It belongs to the hexokinase family. As to quaternary structure, monomer.

It carries out the reaction a D-hexose + ATP = a D-hexose 6-phosphate + ADP + H(+). The enzyme catalyses D-fructose + ATP = D-fructose 6-phosphate + ADP + H(+). The catalysed reaction is D-glucose + ATP = D-glucose 6-phosphate + ADP + H(+). Its pathway is carbohydrate metabolism; hexose metabolism. It functions in the pathway carbohydrate degradation; glycolysis; D-glyceraldehyde 3-phosphate and glycerone phosphate from D-glucose: step 1/4. In terms of biological role, catalyzes the phosphorylation of hexose, such as D-glucose and D-fructose, to hexose 6-phosphate (D-glucose 6-phosphate and D-fructose 6-phosphate, respectively). Mediates the initial step of glycolysis by catalyzing phosphorylation of D-glucose to D-glucose 6-phosphate. This Schwanniomyces occidentalis (Yeast) protein is Hexokinase (HXK).